A 194-amino-acid chain; its full sequence is Glycerol-3-phosphate acyltransferase (194 aa).

Helical transmembrane passes span 2 to 22 (AFFC…GVWI), 52 to 72 (LGVA…YIAS), 80 to 100 (DLVI…FISF), 112 to 132 (VFLF…ILVA), 137 to 157 (YVSL…FFTH), and 161 to 181 (YLFA…KTNI).

Belongs to the PlsY family. As to quaternary structure, probably interacts with PlsX.

Its subcellular location is the cell inner membrane. The enzyme catalyses an acyl phosphate + sn-glycerol 3-phosphate = a 1-acyl-sn-glycero-3-phosphate + phosphate. Its pathway is lipid metabolism; phospholipid metabolism. Its function is as follows. Catalyzes the transfer of an acyl group from acyl-phosphate (acyl-PO(4)) to glycerol-3-phosphate (G3P) to form lysophosphatidic acid (LPA). This enzyme utilizes acyl-phosphate as fatty acyl donor, but not acyl-CoA or acyl-ACP. This Fusobacterium nucleatum subsp. nucleatum (strain ATCC 25586 / DSM 15643 / BCRC 10681 / CIP 101130 / JCM 8532 / KCTC 2640 / LMG 13131 / VPI 4355) protein is Glycerol-3-phosphate acyltransferase.